Consider the following 120-residue polypeptide: Large ribosomal subunit protein bL19 (120 aa).

Belongs to the bacterial ribosomal protein bL19 family.

In terms of biological role, this protein is located at the 30S-50S ribosomal subunit interface and may play a role in the structure and function of the aminoacyl-tRNA binding site. In Thermodesulfovibrio yellowstonii (strain ATCC 51303 / DSM 11347 / YP87), this protein is Large ribosomal subunit protein bL19.